The sequence spans 97 residues: Aspartyl/glutamyl-tRNA(Asn/Gln) amidotransferase subunit C (97 aa).

This sequence belongs to the GatC family. Heterotrimer of A, B and C subunits.

It catalyses the reaction L-glutamyl-tRNA(Gln) + L-glutamine + ATP + H2O = L-glutaminyl-tRNA(Gln) + L-glutamate + ADP + phosphate + H(+). The enzyme catalyses L-aspartyl-tRNA(Asn) + L-glutamine + ATP + H2O = L-asparaginyl-tRNA(Asn) + L-glutamate + ADP + phosphate + 2 H(+). Its function is as follows. Allows the formation of correctly charged Asn-tRNA(Asn) or Gln-tRNA(Gln) through the transamidation of misacylated Asp-tRNA(Asn) or Glu-tRNA(Gln) in organisms which lack either or both of asparaginyl-tRNA or glutaminyl-tRNA synthetases. The reaction takes place in the presence of glutamine and ATP through an activated phospho-Asp-tRNA(Asn) or phospho-Glu-tRNA(Gln). In Cyanothece sp. (strain PCC 7425 / ATCC 29141), this protein is Aspartyl/glutamyl-tRNA(Asn/Gln) amidotransferase subunit C.